Reading from the N-terminus, the 205-residue chain is Molybdenum cofactor guanylyltransferase (205 aa).

GTP contacts are provided by residues Leu-14 to Gly-16, Lys-27, Asp-77, and Asp-107. Residue Asp-107 participates in Mg(2+) binding.

Belongs to the MobA family. Monomer. Requires Mg(2+) as cofactor.

The protein resides in the cytoplasm. The enzyme catalyses Mo-molybdopterin + GTP + H(+) = Mo-molybdopterin guanine dinucleotide + diphosphate. Transfers a GMP moiety from GTP to Mo-molybdopterin (Mo-MPT) cofactor (Moco or molybdenum cofactor) to form Mo-molybdopterin guanine dinucleotide (Mo-MGD) cofactor. In Burkholderia ambifaria (strain MC40-6), this protein is Molybdenum cofactor guanylyltransferase.